Reading from the N-terminus, the 2144-residue chain is Alpha-protein kinase 2 (2144 aa).

Residues 7 to 105 (PERRTLCFLS…ICCSASLEVQ (99 aa)) form the Ig-like 1 domain. An intrachain disulfide couples Cys33 to Cys98. Disordered regions lie at residues 425 to 473 (ETAK…LQTM), 500 to 575 (SLAR…GAPG), 727 to 775 (EDNE…NVGS), 845 to 864 (QTQGSEPPRSTDKRSQDGKS), 881 to 907 (EASEDAVGETAADVENPPSTFSSTLPY), 1011 to 1065 (SCEA…PEGQ), 1316 to 1340 (DPVEDKELEVTDSPSEVSKTGEMEM), 1471 to 1509 (GPGEEGQGIPSVCSMSQTQDGGDRSLGEAGQRGTDETEV), 1565 to 1587 (CGNHVRSSDDLTNTPCTSSPKGN), 1629 to 1696 (ECES…GSGH), and 1720 to 1754 (ENSRKNSIVKKTPKFERSLSRTDEKRDPKRAPCKA). Positions 500-511 (SLARERTDEKYP) are enriched in basic and acidic residues. Residues 853–864 (RSTDKRSQDGKS) are compositionally biased toward basic and acidic residues. The segment covering 897–906 (PPSTFSSTLP) has biased composition (polar residues). Residues 1574–1587 (DLTNTPCTSSPKGN) are compositionally biased toward polar residues. 2 stretches are compositionally biased toward basic and acidic residues: residues 1631–1645 (ESEKDPKSLLRRDPC) and 1732–1754 (PKFERSLSRTDEKRDPKRAPCKA). The Ig-like 2 domain maps to 1759 to 1847 (PVLLKRIQAE…GKVTAEFNLT (89 aa)). Cys1781 and Cys1831 are joined by a disulfide. The Alpha-type protein kinase domain occupies 1874–2106 (KEDVFNDSYF…YCKMLGLKSL (233 aa)). The tract at residues 2109–2144 (NSQKPKKPIVGKGRVPTNATQVKTPESETPPAERKT) is disordered.

Belongs to the protein kinase superfamily. Alpha-type protein kinase family. ALPK subfamily.

The protein localises to the basolateral cell membrane. It catalyses the reaction L-seryl-[protein] + ATP = O-phospho-L-seryl-[protein] + ADP + H(+). It carries out the reaction L-threonyl-[protein] + ATP = O-phospho-L-threonyl-[protein] + ADP + H(+). Protein kinase that recognizes phosphorylation sites in which the surrounding peptides have an alpha-helical conformation. Regulates cardiac development and cardiomyocyte differentiation by negatively regulating Wnt/beta-catenin signaling. This chain is Alpha-protein kinase 2, found in Mus musculus (Mouse).